The sequence spans 553 residues: MGPRSSTRIPIPLMLTIRIALALSCVHLASSLDGRPLAAAGIVVTGDKAVNIYTSSQTGSIIVKLHPNMPKDKEACAKAPLEAYNRTLTTLLTPLGDSIRRIQESVTTSGGRRQKRFIGAIIGSVALGVATAAQITAASALIQANQNAANILRLKESITATIEAVHEVTDGLSQLAVAVGKMQQFVNDQFNNTAQELDCIKITQQVGVELNLYLTELTTVFGPQITSPALTQLTIQALYNLAGGNMDYLLTKLGVGNNQLSSLIGSGLITGNPILYDSQTQLLGIQVTLPSVGNLNNMRATYLETLSVSTTKGFASALVPKVVTQVGSVIEELDTSYCIETDLDLYCTRIVTFPMSPGIYSCLNGNTSACMYSKTEGALTTPYMTLKGSVIANCKMTTCRCADPPGIISQNYGEAVSLIDRHSCNVLSLDGITLRLSGEFDATYQKNISILDSQVIVTGNLDISTELGNVNNSISNALDKLEESNSKLDKVNVKLTSTSALITYIALTAISLVCGILSLVLACYLMYKQKAQQKTLLWLGNNTLGQMRATTKM.

A signal peptide spans 1–31; the sequence is MGPRSSTRIPIPLMLTIRIALALSCVHLASS. Topologically, residues 32 to 500 are extracellular; it reads LDGRPLAAAG…VNVKLTSTSA (469 aa). Intrachain disulfides connect Cys-76-Cys-199, Cys-338-Cys-347, Cys-362-Cys-370, Cys-394-Cys-399, and Cys-401-Cys-424. Asn-85 carries an N-linked (GlcNAc...) asparagine; by host glycan. The fusion peptide stretch occupies residues 117–141; the sequence is FIGAIIGSVALGVATAAQITAASAL. A coiled-coil region spans residues 142-170; that stretch reads IQANQNAANILRLKESITATIEAVHEVTD. Asn-191 is a glycosylation site (N-linked (GlcNAc...) asparagine; by host). Asn-366 carries N-linked (GlcNAc...) asparagine; by host glycosylation. 2 N-linked (GlcNAc...) asparagine; by host glycosylation sites follow: Asn-447 and Asn-471. A coiled-coil region spans residues 466 to 491; it reads ELGNVNNSISNALDKLEESNSKLDKV. Residues 501–521 form a helical membrane-spanning segment; the sequence is LITYIALTAISLVCGILSLVL. At 522-553 the chain is on the cytoplasmic side; it reads ACYLMYKQKAQQKTLLWLGNNTLGQMRATTKM. Residue Cys-523 is the site of S-palmitoyl cysteine; by host attachment.

The protein belongs to the paramyxoviruses fusion glycoprotein family. As to quaternary structure, homotrimer of disulfide-linked F1-F2. The inactive precursor F0 is glycosylated and proteolytically cleaved into F1 and F2 to be functionally active. The cleavage is mediated by cellular proteases during the transport and maturation of the polypeptide.

It localises to the virion membrane. Its subcellular location is the host cell membrane. Its function is as follows. Class I viral fusion protein. Under the current model, the protein has at least 3 conformational states: pre-fusion native state, pre-hairpin intermediate state, and post-fusion hairpin state. During viral and plasma cell membrane fusion, the heptad repeat (HR) regions assume a trimer-of-hairpins structure, positioning the fusion peptide in close proximity to the C-terminal region of the ectodomain. The formation of this structure appears to drive apposition and subsequent fusion of viral and plasma cell membranes. Directs fusion of viral and cellular membranes leading to delivery of the nucleocapsid into the cytoplasm. This fusion is pH independent and occurs directly at the outer cell membrane. The trimer of F1-F2 (F protein) probably interacts with HN at the virion surface. Upon HN binding to its cellular receptor, the hydrophobic fusion peptide is unmasked and interacts with the cellular membrane, inducing the fusion between cell and virion membranes. Later in infection, F proteins expressed at the plasma membrane of infected cells could mediate fusion with adjacent cells to form syncytia, a cytopathic effect that could lead to tissue necrosis. The protein is Fusion glycoprotein F0 (F) of Gallus gallus (Chicken).